The sequence spans 1321 residues: C-Jun-amino-terminal kinase-interacting protein 4 (1321 aa).

The residue at position 1 (methionine 1) is an N-acetylmethionine. Residues 7 to 95 enclose the RH1 domain; sequence VVYQEEPGGS…ITQYEREKAL (89 aa). Residues 66-166 are a coiled coil; that stretch reads AQDQEHQVEL…NALHQRHTEM (101 aa). A phosphoserine mark is found at serine 109, serine 183, serine 185, serine 194, and serine 203. The disordered stretch occupies residues 203-292; it reads SLGIFPLPAG…SDVATIPTDT (90 aa). Threonine 217 carries the post-translational modification Phosphothreonine. The span at 236–253 shows a compositional bias: polar residues; that stretch reads ELSQPRSHTSLKVSNSPE. 5 positions are modified to phosphoserine: serine 238, serine 251, serine 265, serine 268, and serine 272. Residues 266–285 are compositionally biased toward polar residues; that stretch reads DVSQGGSKATTPASTANSDV. Threonine 292 is subject to Phosphothreonine. 4 positions are modified to phosphoserine: serine 311, serine 329, serine 332, and serine 347. 3 positions are modified to phosphothreonine: threonine 348, threonine 365, and threonine 418. A coiled-coil region spans residues 408-534; sequence REVENLILEN…LQEAVRWTEM (127 aa). Residues 473 to 489 are compositionally biased toward basic and acidic residues; sequence LRKARAEAEDARQKAKD. Disordered stretches follow at residues 473–500 and 563–600; these read LRKA…TAQR and SSNT…SQLP. The RH2 domain maps to 500 to 571; it reads RKRFTRVEMA…SSSNTTKKPE (72 aa). Threonine 586 bears the Phosphothreonine mark. Residue serine 588 is modified to Phosphoserine. Phosphothreonine is present on threonine 595. Phosphoserine is present on residues serine 705, serine 728, serine 730, serine 732, and serine 733. The stretch at 724–758 forms a coiled coil; the sequence is SKQRSASQSSLDKLDQELKEQQKELKNQEELSSLV. Residues 854–906 form a disordered region; the sequence is GAATSPSTNGASPVMDKPPEMEAENSEVDENVPTAEEATEATEGNAGSAEDTV. The segment covering 855–864 has biased composition (polar residues); sequence AATSPSTNGA. Acidic residues predominate over residues 874–883; it reads MEAENSEVDE. A compositionally biased stretch (low complexity) spans 894–903; it reads ATEGNAGSAE. Position 1188 is a phosphoserine (serine 1188). A disordered region spans residues 1239–1266; it reads PQSSSSGTDLTGDKAGPSAQEPGSQTPL. Threonine 1264 carries the phosphothreonine modification.

The protein belongs to the JIP scaffold family. As to quaternary structure, homodimer. The homodimer interacts with ARF6, forming a heterotetramer. Homooligomer. Interacts with MAX, MAPK14, MAP3K3, MYC, KNS2 and MAP2K4. Interaction with KNS2 is important in the formation of ternary complex with MAPK8. Interacts with NFKB1. Interacts with PIP4P1. Interacts with PIKFYVE. In terms of assembly, interacts with MAPK8, MAPK9, MAPK10. In terms of processing, phosphorylated by MAPK8 and MAPK14. As to expression, expressed only in testis on the round spermatids of stage I, II and II. Absent in spermatogonia and spermatocyte. Expressed in testis and in acute myeloid leukemia (AML) patients. In terms of tissue distribution, expressed in testis.

It is found in the cytoplasm. The protein resides in the perinuclear region. It localises to the lysosome membrane. Its subcellular location is the cytoplasmic vesicle. The protein localises to the secretory vesicle. It is found in the acrosome. Its activity is regulated as follows. May play a role in spermatozoa-egg-interaction. In terms of biological role, the JNK-interacting protein (JIP) group of scaffold proteins selectively mediates JNK signaling by aggregating specific components of the MAPK cascade to form a functional JNK signaling module. Regulates lysosomal positioning by acting as an adapter protein which links PIP4P1-positive lysosomes to the dynein-dynactin complex. Assists PIKFYVE selective functionality in microtubule-based endosome-to-TGN trafficking. This Homo sapiens (Human) protein is C-Jun-amino-terminal kinase-interacting protein 4.